The following is a 429-amino-acid chain: Glutamate-1-semialdehyde 2,1-aminomutase 2 (429 aa).

Lys268 carries the post-translational modification N6-(pyridoxal phosphate)lysine.

Belongs to the class-III pyridoxal-phosphate-dependent aminotransferase family. HemL subfamily. As to quaternary structure, homodimer. Pyridoxal 5'-phosphate serves as cofactor.

It localises to the cytoplasm. The catalysed reaction is (S)-4-amino-5-oxopentanoate = 5-aminolevulinate. Its pathway is porphyrin-containing compound metabolism; protoporphyrin-IX biosynthesis; 5-aminolevulinate from L-glutamyl-tRNA(Glu): step 2/2. In Staphylococcus carnosus (strain TM300), this protein is Glutamate-1-semialdehyde 2,1-aminomutase 2.